We begin with the raw amino-acid sequence, 92 residues long: MNLSTLLLTLACISQLHGGSANQATDIMRRQLRMGKAVASLLENQHQSARELEENIMADEDNKANEVQADVSQFRVRRLRSPNYVELIELRG.

The first 21 residues, 1–21 (MNLSTLLLTLACISQLHGGSA), serve as a signal peptide directing secretion. The short motif at 30 to 33 (RQLR) is the RxLR element.

Belongs to the RxLR effector family.

The protein resides in the secreted. Its subcellular location is the host nucleus. It is found in the host cytoplasm. Its function is as follows. Secreted effector that completely suppresses the host cell death induced by cell death-inducing proteins. This is Secreted RxLR effector protein 21 from Plasmopara viticola (Downy mildew of grapevine).